Consider the following 447-residue polypeptide: ATP-dependent protease ATPase subunit HslU (447 aa).

Residues isoleucine 18, 60 to 65 (GVGKTE), aspartate 259, glutamate 325, and arginine 397 contribute to the ATP site.

It belongs to the ClpX chaperone family. HslU subfamily. As to quaternary structure, a double ring-shaped homohexamer of HslV is capped on each side by a ring-shaped HslU homohexamer. The assembly of the HslU/HslV complex is dependent on binding of ATP.

Its subcellular location is the cytoplasm. Functionally, ATPase subunit of a proteasome-like degradation complex; this subunit has chaperone activity. The binding of ATP and its subsequent hydrolysis by HslU are essential for unfolding of protein substrates subsequently hydrolyzed by HslV. HslU recognizes the N-terminal part of its protein substrates and unfolds these before they are guided to HslV for hydrolysis. The sequence is that of ATP-dependent protease ATPase subunit HslU from Burkholderia cenocepacia (strain ATCC BAA-245 / DSM 16553 / LMG 16656 / NCTC 13227 / J2315 / CF5610) (Burkholderia cepacia (strain J2315)).